The primary structure comprises 390 residues: D-alanyl-D-alanine carboxypeptidase DacD (390 aa).

A signal peptide spans 1 to 23 (MLLKRRLFIAASLFAMHLSPALA). Ser-65 functions as the Acyl-ester intermediate in the catalytic mechanism. The active-site Proton acceptor is Lys-68. Ser-131 is a catalytic residue. Lys-234 contacts substrate.

Belongs to the peptidase S11 family.

The protein resides in the cell inner membrane. The enzyme catalyses Preferential cleavage: (Ac)2-L-Lys-D-Ala-|-D-Ala. Also transpeptidation of peptidyl-alanyl moieties that are N-acyl substituents of D-alanine.. It participates in cell wall biogenesis; peptidoglycan biosynthesis. In terms of biological role, removes C-terminal D-alanyl residues from sugar-peptide cell wall precursors. This chain is D-alanyl-D-alanine carboxypeptidase DacD (dacD), found in Salmonella typhimurium (strain LT2 / SGSC1412 / ATCC 700720).